A 1269-amino-acid polypeptide reads, in one-letter code: DNA-directed RNA polymerase subunit beta'' (1269 aa).

Cysteine 226, cysteine 301, cysteine 308, and cysteine 311 together coordinate Zn(2+).

It belongs to the RNA polymerase beta' chain family. RpoC2 subfamily. In plastids the minimal PEP RNA polymerase catalytic core is composed of four subunits: alpha, beta, beta', and beta''. When a (nuclear-encoded) sigma factor is associated with the core the holoenzyme is formed, which can initiate transcription. Requires Zn(2+) as cofactor.

It is found in the plastid. The protein resides in the chloroplast. It carries out the reaction RNA(n) + a ribonucleoside 5'-triphosphate = RNA(n+1) + diphosphate. Functionally, DNA-dependent RNA polymerase catalyzes the transcription of DNA into RNA using the four ribonucleoside triphosphates as substrates. This chain is DNA-directed RNA polymerase subunit beta'', found in Cyanidium caldarium (Red alga).